Consider the following 517-residue polypeptide: MTSSKIEMPGEVKADPAALMASLHLLPSPTLNLEIKYTKIFINNEWQNSESGRIFPVYNPATGEQICDIQEADKVDTDKAVRAARLAFSLGSVWRRMDASERGHLLDKLADLVERDRAILATMESLNSGKPFLQAFYVDLQGVIKTLRYYAGWADKIHGMTIPVDGDYFTFTRHEPIGVCGQIIPWNFPLLMFAWKIAPALCCGNTVVIKPAEQTPLSALYMGALIKEAGFPPGVVNILPGFGPIVGAAIASHVGIDKIAFTGSTEVGKLIQEAAGRSNLKRVTLELGGKSPNIIFADADLDYAVEQAHQGVFFNQGQCCTAGSRIYVEESIYEEFVRKSVKRAKRKIVGSPFDPTTEQGPQIDKKQYNKILELIQSGITEGAKLECGGKGLGRKGFFIEPTVFSNVTDDMRIAKEEIFGPVQEILRFKTMDEVIERANNSDFGLVAAVFTNDINKALTVSSAMQAGTVWINCYNALNAQSPFGGSKSGNGREMGECGLREYSEVKTVTIKIPQENS.

NAD(+) contacts are provided by residues 184–186, 210–213, and 264–266; these read IPW, KPAE, and STE. E286 functions as the Proton acceptor in the catalytic mechanism. C320 serves as the catalytic Nucleophile. Residues 366–370 and E417 each bind NAD(+); that span reads KQYNK.

It belongs to the aldehyde dehydrogenase family. Homotetramer. As to expression, expressed in the high vocal center (HVC) which integrates auditory and motor activities and constitutes a nodal nucleus on the song system.

It localises to the cytoplasm. It catalyses the reaction retinal + NAD(+) + H2O = retinoate + NADH + 2 H(+). The catalysed reaction is all-trans-retinal + NAD(+) + H2O = all-trans-retinoate + NADH + 2 H(+). The enzyme catalyses all-trans-13,14-dihydroretinal + NAD(+) + H2O = all-trans-13,14-dihydroretinoate + NADH + 2 H(+). It participates in cofactor metabolism; retinol metabolism. Its function is as follows. Catalyzes the NAD-dependent oxidation of aldehyde substrates, such as all-trans-retinal and all-trans-13,14-dihydroretinal, to their corresponding carboxylic acids, all-trans-retinoate and all-trans-13,14-dihydroretinoate, respectively. Retinoate signaling is critical for the transcriptional control of many genes, for instance it is crucial for initiation of meiosis in both male and female. Recognizes retinal as substrate, both in its free form and when bound to cellular retinol-binding protein. Lacks activity with benzaldehyde, acetaldehyde and octanal. Displays complete lack of activity with citral. Plays a significant role in the acquisition and production of learned songs. This Taeniopygia guttata (Zebra finch) protein is Retinal dehydrogenase 2 (ALDH1A2).